We begin with the raw amino-acid sequence, 86 residues long: Large ribosomal subunit protein bL27 (86 aa).

The tract at residues 1–24 (MATKKAGGSSRNGRDSAGRRLGVK) is disordered.

The protein belongs to the bacterial ribosomal protein bL27 family.

This Rickettsia conorii (strain ATCC VR-613 / Malish 7) protein is Large ribosomal subunit protein bL27.